Here is a 688-residue protein sequence, read N- to C-terminus: ATP-dependent RNA helicase ded1 (688 aa).

2 stretches are compositionally biased toward polar residues: residues 1 to 15 and 55 to 67; these read MADQ…LSID and GLNN…NNNY. A disordered region spans residues 1-170; it reads MADQLSSGMG…TPDDPSKQHT (170 aa). The span at 88 to 102 shows a compositional bias: gly residues; the sequence is GFEGQQGAGWGGPRP. The segment covering 103-114 has biased composition (low complexity); the sequence is QGGFNPNAYRGN. The segment covering 115–129 has biased composition (gly residues); that stretch reads AGAGAGAGAGGGGGS. A Q motif motif is present at residues 194–222; that stretch reads LTFSNPPLDNHLISNIQLARYNVPTPVQK. Positions 225 to 416 constitute a Helicase ATP-binding domain; the sequence is IPIVMGGRDL…RDFLKDYIFL (192 aa). ATP is bound at residue 238-245; that stretch reads AQTGSGKT. The DEAD box signature appears at 360–363; sequence DEAD. The Helicase C-terminal domain occupies 427–587; that stretch reads NITQKVEYVE…EVPAFLETIA (161 aa). Positions 590 to 615 are disordered; that stretch reads SSFGGGRGGRGGGRGGGRGRTQTADY. A compositionally biased stretch (gly residues) spans 592–608; the sequence is FGGGRGGRGGGRGGGRG.

Belongs to the DEAD box helicase family. DDX3/DED1 subfamily.

It is found in the cytoplasm. It carries out the reaction ATP + H2O = ADP + phosphate + H(+). Its function is as follows. ATP-binding RNA helicase involved in translation initiation. Remodels RNA in response to ADP and ATP concentrations by facilitating disruption, but also formation of RNA duplexes. In Neurospora crassa (strain ATCC 24698 / 74-OR23-1A / CBS 708.71 / DSM 1257 / FGSC 987), this protein is ATP-dependent RNA helicase ded1 (drh-9).